Here is a 63-residue protein sequence, read N- to C-terminus: Large ribosomal subunit protein bL32 (63 aa).

Residues 1-20 (MANPKAKMSKSRRDKRRAQF) are disordered. Residues 7–18 (KMSKSRRDKRRA) show a composition bias toward basic residues.

Belongs to the bacterial ribosomal protein bL32 family.

The protein is Large ribosomal subunit protein bL32 of Chlorobaculum parvum (strain DSM 263 / NCIMB 8327) (Chlorobium vibrioforme subsp. thiosulfatophilum).